The primary structure comprises 345 residues: Achaete-scute complex protein T4 (345 aa).

A compositionally biased stretch (low complexity) spans 78–92; that stretch reads SESVSSLSPGSSPAP. Positions 78-109 are disordered; the sequence is SESVSSLSPGSSPAPYNVDQSQSVQRRNARER. The bHLH domain maps to 99–162; it reads QSVQRRNARE…RIAVEYIRRL (64 aa).

In terms of assembly, efficient DNA binding requires dimerization with another bHLH protein. Interacts with da (via bHLH motif). Interacts with Bap60. L(1)SC, SC and AC strongly label the presumptive stomatogastric nervous system, while ASE is more prominent in the presumptive procephalic lobe. Associates with the somatic nuclei through nuclear cycles 9 and 10. During nuclear cycle 11 distributes uniformly in the embryo.

Functionally, AS-C proteins are involved in the determination of the neuronal precursors in the peripheral nervous system and the central nervous system. Also involved in sex determination and dosage compensation. The polypeptide is Achaete-scute complex protein T4 (sc) (Drosophila melanogaster (Fruit fly)).